The chain runs to 465 residues: Sperm microtubule associated protein 2-like (465 aa).

Polar residues predominate over residues 1–29; sequence MENQEFLSSSAPSEVTDGQVSTEISTCSE. The interval 1–140 is disordered; the sequence is MENQEFLSSS…REAKETELLP (140 aa). 2 stretches are compositionally biased toward basic and acidic residues: residues 40–70 and 114–137; these read LDTH…QDQR and KARE…KETE. 8 THEG repeats span residues 174 to 192, 214 to 233, 260 to 279, 297 to 316, 333 to 352, 373 to 392, 409 to 428, and 446 to 465; these read RKCF…PKKQ, GALK…PKEV, PALF…PNGF, SLRI…AKGT, STLS…PRIK, AAMI…SKSV, ATTH…PNKR, and AALK…PLTR.

This chain is Sperm microtubule associated protein 2-like, found in Homo sapiens (Human).